Reading from the N-terminus, the 416-residue chain is LL-diaminopimelate aminotransferase (416 aa).

Substrate contacts are provided by tyrosine 25 and glycine 52. Pyridoxal 5'-phosphate contacts are provided by residues tyrosine 78, 115–116 (SK), tyrosine 140, asparagine 190, tyrosine 221, and 248–250 (SFS). Substrate contacts are provided by lysine 116, tyrosine 140, and asparagine 190. Position 251 is an N6-(pyridoxal phosphate)lysine (lysine 251). Position 259 (arginine 259) interacts with pyridoxal 5'-phosphate.

The protein belongs to the class-I pyridoxal-phosphate-dependent aminotransferase family. As to quaternary structure, homodimer. Pyridoxal 5'-phosphate serves as cofactor.

It is found in the cytoplasm. It carries out the reaction (2S,6S)-2,6-diaminopimelate + 2-oxoglutarate = (S)-2,3,4,5-tetrahydrodipicolinate + L-glutamate + H2O + H(+). The protein operates within amino-acid biosynthesis; L-lysine biosynthesis via DAP pathway; LL-2,6-diaminopimelate from (S)-tetrahydrodipicolinate (aminotransferase route): step 1/1. Involved in the synthesis of meso-diaminopimelate (m-DAP or DL-DAP), required for both lysine and peptidoglycan biosynthesis. Catalyzes the direct conversion of tetrahydrodipicolinate to LL-diaminopimelate. The polypeptide is LL-diaminopimelate aminotransferase (dapL) (Methanococcus maripaludis (strain DSM 14266 / JCM 13030 / NBRC 101832 / S2 / LL)).